The chain runs to 315 residues: MTEAWRPEDDEPRGASGPVRVRVPAKINLHLGVGPLRRDGYHELNTVYHAISIHDELTARRGDTLTLTMEGEGAGELALDESNLVIRAARALAGSTGVPPHARLHLRKQIPLAGGLAGGSADAAAALVACDALWGTGLTRDELAEIAAGLGSDVPFLIHGGTALGTGRGEAVSPVLARPTVWHWVVAVADGGLSTPVAYRELDRLRAAGAAGPPLGSTDTLLAALRQPDPRVLAAALGNDLQDAALALRPALAATLKAGEAAGALAGIVSGSGPTCVFLAAGAADAERIAAELSALDVCRQARTAHGPVAGARIG.

The active site involves Lys26. 111–121 (PLAGGLAGGSA) lines the ATP pocket. Residue Asp153 is part of the active site.

Belongs to the GHMP kinase family. IspE subfamily.

The catalysed reaction is 4-CDP-2-C-methyl-D-erythritol + ATP = 4-CDP-2-C-methyl-D-erythritol 2-phosphate + ADP + H(+). It functions in the pathway isoprenoid biosynthesis; isopentenyl diphosphate biosynthesis via DXP pathway; isopentenyl diphosphate from 1-deoxy-D-xylulose 5-phosphate: step 3/6. Functionally, catalyzes the phosphorylation of the position 2 hydroxy group of 4-diphosphocytidyl-2C-methyl-D-erythritol. The protein is 4-diphosphocytidyl-2-C-methyl-D-erythritol kinase of Salinispora tropica (strain ATCC BAA-916 / DSM 44818 / JCM 13857 / NBRC 105044 / CNB-440).